A 392-amino-acid polypeptide reads, in one-letter code: 8-amino-7-oxononanoate synthase (392 aa).

Residue Gly108–Phe109 coordinates pyridoxal 5'-phosphate. Substrate is bound at residue His133. Residues Ser180, Asp205–His208, and Thr236–Lys239 contribute to the pyridoxal 5'-phosphate site. The residue at position 239 (Lys239) is an N6-(pyridoxal phosphate)lysine. Thr353 serves as a coordination point for substrate.

The protein belongs to the class-II pyridoxal-phosphate-dependent aminotransferase family. BioF subfamily. In terms of assembly, homodimer. It depends on pyridoxal 5'-phosphate as a cofactor.

The catalysed reaction is 6-carboxyhexanoyl-[ACP] + L-alanine + H(+) = (8S)-8-amino-7-oxononanoate + holo-[ACP] + CO2. Its pathway is cofactor biosynthesis; biotin biosynthesis. In terms of biological role, catalyzes the decarboxylative condensation of pimeloyl-[acyl-carrier protein] and L-alanine to produce 8-amino-7-oxononanoate (AON), [acyl-carrier protein], and carbon dioxide. The polypeptide is 8-amino-7-oxononanoate synthase (Bacillus pumilus (strain SAFR-032)).